Consider the following 427-residue polypeptide: MSSVEVNRENADVANTNRQANLAEGYEIKELNESQKQYIRSSIPILESSGVNLTKAFYQKMLGNYPEVLPYFNKAHQISLSQPRILAFALLNYAKNIDDLTSLSAFMDQIVVKHVGLQIKAEHYPIVGHCLLSTMQELLPSDVATPAFLEAWTTAYGNLAKILIDSEKKVYQSQPWNGFVEFKVTELINESSDVKSVYLGPKDPAFRISHAHPGQYVSVLWEIPGLSHKTLREYSLSNRVDTCRNQFRISVRRVAGGVVSNFVHDNLKVGDIVGVSPPAGNFVYKRSEENVNRPLLCFAGGIGITPLIPIIETALLDGRKVNFCYSSRNYVSRPFKQWLEQLKLKYKENLKLKEFFSEESSVTKEQIVDEVMTRIINEEDLEKLDLSECDIYMLGPNNYMRFVKQELVKLGVEPNKVQSEFFGPYIP.

Residues 30–168 (ELNESQKQYI…LAKILIDSEK (139 aa)) form the Globin domain. Histidine 114 contributes to the heme b binding site. Catalysis depends on charge relay system residues tyrosine 124 and glutamate 167. A reductase region spans residues 176–427 (WNGFVEFKVT…QSEFFGPYIP (252 aa)). One can recognise an FAD-binding FR-type domain in the interval 177 to 285 (NGFVEFKVTE…SPPAGNFVYK (109 aa)). FAD contacts are provided by residues tyrosine 216 and 232 to 235 (REYS). 301-306 (GIGITP) lines the NADP(+) pocket. Position 421 to 424 (421 to 424 (FFGP)) interacts with FAD.

The protein belongs to the globin family. Two-domain flavohemoproteins subfamily. This sequence in the C-terminal section; belongs to the flavoprotein pyridine nucleotide cytochrome reductase family. FAD serves as cofactor. It depends on heme b as a cofactor.

It is found in the cytoplasm. It localises to the nucleus. The enzyme catalyses 2 nitric oxide + NADPH + 2 O2 = 2 nitrate + NADP(+) + H(+). The catalysed reaction is 2 nitric oxide + NADH + 2 O2 = 2 nitrate + NAD(+) + H(+). Its function is as follows. Is involved in NO detoxification in an aerobic process, termed nitric oxide dioxygenase (NOD) reaction that utilizes O(2) and NAD(P)H to convert NO to nitrate, which protects the fungus from various noxious nitrogen compounds. Therefore, plays a central role in the inducible response to nitrosative stress. In the presence of oxygen and NADH, it has NADH oxidase activity, which leads to the generation of superoxide and H(2)O(2). Under anaerobic conditions, it also exhibits nitric oxide reductase and FAD reductase activities. However, all these reactions are much lower than NOD activity. The protein is Flavohemoprotein of Schizosaccharomyces pombe (strain 972 / ATCC 24843) (Fission yeast).